The chain runs to 869 residues: MRVLSAIALVASLVPSALSAPASESRVSTQLQSRDAAGYSSPPYYPAPNGGWLSSWADAYEKAQRVVRNMTLAEKVNLTTGTGIFMGPCVGQTGSALRFGIPNLCLQDSPLGVRNSDHNTAFPAGITVGATFDKDLMYARGVELGEEFRGKGINVFLGPSVGPIGRKPRGGRNWEGFGADPSLQAIGGAQTIKGIQSRGVIATIKHYIGNEQEMYRMSNIGQRAYSSNIDDRTLHELYLWPFAEGIRAGVGAVMTAYNEVNSSACSQNSKLLNEILKDELGFQGFVMTDWLGQYGGVSSALAGLDMAMPGDGAIPLLGNAYWGSELSHSILNGSVPVSRLNDMVTRIVATWYKMGQDGDFPLPNFSSNTQDATGPLYPGALFSPSGVVNQYVNVQADHNITARAIARDAITLLKNDDNILPLKRNDSLKVFGTDAGPNPDGLNSCADMGCNKGVLTMGWGSGTSRLPYLVTPQEAIANISSNAAFFITDNFPSNVAVSSGDVAVVFISADSGENYITVEGNPGDRTSAGLNAWHNGDKLVKDAAAKFSKVVVVVHTVGPILMEEWIDLPSVKAVLVAHLPGQEAGWSLTDVLFGDYSPSGHLPYTIPRAESDYPSSVGLLSQPIVQIQDTHTEGLYIDYRHFLKSSITPRYPFGHGLSYTTFSFSQPTLSVRTALDSAYPPTRPPKGPTPTYPTTIPNPSEVAWPKNFDRIWRYLYPYLDDPAGAAKNSSKTYPYPAGYTTVPKPAPRAGGAEGGNPALFDVAFAVSVTVTNTGTRPGRAVAQLYVELPDSLGETPSRQLRQFAKTKTLAPGASETLTMEFTRKDISVWDVVVQDWKAPVRGEGVKIWLGESVLDMRAVCEVGGACRVI.

An N-terminal signal peptide occupies residues 1–19 (MRVLSAIALVASLVPSALS). 3 N-linked (GlcNAc...) asparagine glycosylation sites follow: Asn69, Asn77, and Asn261. Residue Asp289 is part of the active site. N-linked (GlcNAc...) asparagine glycans are attached at residues Asn332, Asn364, Asn399, Asn425, and Asn478. The interval 678–698 (AYPPTRPPKGPTPTYPTTIPN) is disordered. The span at 681-691 (PTRPPKGPTPT) shows a compositional bias: pro residues. N-linked (GlcNAc...) asparagine glycosylation occurs at Asn728.

Belongs to the glycosyl hydrolase 3 family.

It is found in the secreted. The enzyme catalyses Hydrolysis of terminal, non-reducing beta-D-glucosyl residues with release of beta-D-glucose.. It participates in glycan metabolism; cellulose degradation. Functionally, beta-glucosidases are one of a number of cellulolytic enzymes involved in the degradation of cellulosic biomass. Catalyzes the last step releasing glucose from the inhibitory cellobiose. The polypeptide is Probable beta-glucosidase F (bglF) (Neosartorya fischeri (strain ATCC 1020 / DSM 3700 / CBS 544.65 / FGSC A1164 / JCM 1740 / NRRL 181 / WB 181) (Aspergillus fischerianus)).